Reading from the N-terminus, the 1013-residue chain is Trehalose monomycolate exporter MmpL3 (1013 aa).

At 1–14 (MFAWWGRTVYQFRY) the chain is on the cytoplasmic side. A helical membrane pass occupies residues 15-35 (IVIGVMVALCLGGGVYGISLG). Topologically, residues 36-196 (NHVTQSGFYD…KRAEVAAIPL (161 aa)) are periplasmic. A 1,2-diacylglycero-3-phosphoethanolamine is bound at residue 40–44 (QSGFY). Helical transmembrane passes span 197–217 (VAVVLFFVFGTVIAAALPAII) and 218–238 (GGLAIAGALGIMRLVAEFTPV). Residues 239–240 (HF) are Periplasmic-facing. The chain crosses the membrane as a helical span at residues 241–261 (FAQPVVTLIGLGIAIDYGLFI). Residues 262–290 (VSRFREEIAEGYDTEAAVRRTVMTSGRTV) are Cytoplasmic-facing. Residues 291-311 (VFSAVIIVASSVPLLLFPQGF) traverse the membrane as a helical segment. Topologically, residues 312-317 (LKSITY) are periplasmic. Residues 318–338 (AIIASVMLAAILSITVLAAAL) traverse the membrane as a helical segment. Residues 339-401 (AILGPRVDAL…RLVNVVMKRP (63 aa)) lie on the Cytoplasmic side of the membrane. A helical membrane pass occupies residues 402–422 (IAFAAPILVVMVLLIIPLGQL). Over 423–567 (SLGGISEKYL…HSLFDKLPLM (145 aa)) the chain is Periplasmic. Residues 485-513 (SGFTDPDNDPEKMWKERPANDSGSKDPSV) are disordered. Basic and acidic residues predominate over residues 493–512 (DPEKMWKERPANDSGSKDPS). The chain crosses the membrane as a helical span at residues 568 to 588 (ALILIVTTTVLMFLAFGSVVL). The Cytoplasmic portion of the chain corresponds to 589–591 (PIK). A helical transmembrane segment spans residues 592 to 612 (AALMSALTLGSTMGILTWMFV). The Periplasmic segment spans residues 613 to 630 (DGHGSGLMNYTPQPLMAP). Residues 631 to 651 (MIGLIIAVIWGLSTDYEVFLV) traverse the membrane as a helical segment. Aspartate 645 is an SQ109 binding site. The Cytoplasmic segment spans residues 652–678 (SRMVEARERGMSTAEAIRIGTATTGRL). Residues 679–699 (ITGAALILAVVAGAFVFSDLV) form a helical membrane-spanning segment. Topologically, residues 700 to 703 (MMKY) are periplasmic. A helical transmembrane segment spans residues 704–724 (LAFGLLIALLLDATIIRMFLV). Residues 725-1013 (PAVMKLLGDD…QDLLRREGRL (289 aa)) lie on the Cytoplasmic side of the membrane. A disordered region spans residues 754–1013 (TELPDERKRP…QDLLRREGRL (260 aa)). A compositionally biased stretch (basic and acidic residues) spans 757–772 (PDERKRPTVRESETDQ). 2 stretches are compositionally biased toward pro residues: residues 792-803 (HPAPEPVRPMPP) and 820-829 (PPQPPQPPQA). The segment covering 842 to 867 (RFAMARNAVRNAVNSAVHGGAGSAAA) has biased composition (low complexity). The segment covering 875-885 (PGGPAQPPAPP) has biased composition (pro residues). Residues 973-996 (REQEPSTEKLNTREDAPEDPETKR) show a composition bias toward basic and acidic residues.

Belongs to the resistance-nodulation-cell division (RND) (TC 2.A.6) family. MmpL subfamily. As to quaternary structure, monomer. Interacts with TtfA (via N-terminus); active trehalose monomycolate (TMM) biosynthesis is not required for the complex formation. Interacts with MSMEG_5308.

The protein resides in the cell inner membrane. It is found in the cell septum. Its subcellular location is the cell tip. Its activity is regulated as follows. Inhibited by the antimycobacterial compound BM212, a pyrrole derivative. Inhibited by the antitubercular drug SQ109. Inhibited by the adamantyl urea derivative AU1235, the indole carboxamide ICA38 and rimonabant, the antagonist for the cannabinoid receptor CB1. The dissociation constant (Kd) values for SQ109, AU1235, ICA38 and rimonabant are 1.65 uM, 0.29, 0.16 and 29.5, respectively. Inhibitory effects are due to binding of the inhibitors at the proton-transportation channel most likely dissipating the transmembrane electrochemical proton gradient needed for substrate translocation. Transports trehalose monomycolate (TMM) to the cell wall. Flips TMM across the inner membrane. Membrane potential is not required for this function. Transports probably phosphatidylethanolamine (PE) as well. Binds specifically both TMM and PE, but not trehalose dimycolate (TDM). Also binds diacylglycerol (DAG) and other phospholipids, including phosphatidylglycerol (PG), phosphatidylinositol (PI), and cardiolipin (CDL). Contributes to membrane potential, cell wall composition, antibiotic susceptibility and fitness. The protein is Trehalose monomycolate exporter MmpL3 of Mycolicibacterium smegmatis (strain ATCC 700084 / mc(2)155) (Mycobacterium smegmatis).